Here is a 62-residue protein sequence, read N- to C-terminus: Guanine nucleotide-binding protein subunit gamma (62 aa).

The segment at 40–62 (DMLVSGPTDQHNPFQEKKSCSVL) is disordered. A compositionally biased stretch (basic and acidic residues) spans 53–62 (FQEKKSCSVL). Residue cysteine 59 is modified to Cysteine methyl ester. Cysteine 59 carries the S-geranylgeranyl cysteine lipid modification. A propeptide spans 60-62 (SVL) (removed in mature form).

This sequence belongs to the G protein gamma family. G proteins are composed of 3 units, alpha, beta and gamma. Interacts with gpb-1 and gpb-2. Predominantly expressed in the central nervous system.

It localises to the cell membrane. Functionally, guanine nucleotide-binding proteins (G proteins) are involved as a modulator or transducer in various transmembrane signaling systems. The beta and gamma chains are required for the GTPase activity, for replacement of GDP by GTP, and for G protein-effector interaction. The protein is Guanine nucleotide-binding protein subunit gamma (gpc-1) of Caenorhabditis elegans.